Consider the following 141-residue polypeptide: Hemoglobin subunit alpha (141 aa).

One can recognise a Globin domain in the interval 1 to 141; it reads VLSPADKTNV…VSTVLTSKYR (141 aa). Residue Ser3 is modified to Phosphoserine. An N6-succinyllysine modification is found at Lys7. At Thr8 the chain carries Phosphothreonine. An N6-succinyllysine modification is found at Lys11. Lys16 is modified (N6-acetyllysine; alternate). Lys16 carries the post-translational modification N6-succinyllysine; alternate. Residue Tyr24 is modified to Phosphotyrosine. Ser35 carries the post-translational modification Phosphoserine. N6-succinyllysine is present on Lys40. Position 49 is a phosphoserine (Ser49). His58 contributes to the O2 binding site. His87 lines the heme b pocket. Ser102 carries the post-translational modification Phosphoserine. A Phosphothreonine modification is found at Thr108. Ser124 is modified (phosphoserine). Residues Thr134 and Thr137 each carry the phosphothreonine modification. Ser138 carries the phosphoserine modification.

Belongs to the globin family. In terms of assembly, heterotetramer of two alpha chains and two beta chains. Red blood cells.

In terms of biological role, involved in oxygen transport from the lung to the various peripheral tissues. Hemopressin acts as an antagonist peptide of the cannabinoid receptor CNR1. Hemopressin-binding efficiently blocks cannabinoid receptor CNR1 and subsequent signaling. This chain is Hemoglobin subunit alpha (HBA), found in Odobenus rosmarus divergens (Pacific walrus).